The sequence spans 113 residues: Large ribosomal subunit protein uL22 (113 aa).

The protein belongs to the universal ribosomal protein uL22 family. As to quaternary structure, part of the 50S ribosomal subunit.

Its function is as follows. This protein binds specifically to 23S rRNA; its binding is stimulated by other ribosomal proteins, e.g. L4, L17, and L20. It is important during the early stages of 50S assembly. It makes multiple contacts with different domains of the 23S rRNA in the assembled 50S subunit and ribosome. In terms of biological role, the globular domain of the protein is located near the polypeptide exit tunnel on the outside of the subunit, while an extended beta-hairpin is found that lines the wall of the exit tunnel in the center of the 70S ribosome. This Opitutus terrae (strain DSM 11246 / JCM 15787 / PB90-1) protein is Large ribosomal subunit protein uL22.